The following is a 392-amino-acid chain: 23S rRNA (uracil(747)-C(5))-methyltransferase RlmC (392 aa).

4 residues coordinate [4Fe-4S] cluster: cysteine 4, cysteine 12, cysteine 15, and cysteine 93. Residues glutamine 218, phenylalanine 247, glutamate 275, and asparagine 321 each coordinate S-adenosyl-L-methionine. Cysteine 348 (nucleophile) is an active-site residue.

It belongs to the class I-like SAM-binding methyltransferase superfamily. RNA M5U methyltransferase family. RlmC subfamily.

The enzyme catalyses uridine(747) in 23S rRNA + S-adenosyl-L-methionine = 5-methyluridine(747) in 23S rRNA + S-adenosyl-L-homocysteine + H(+). Functionally, catalyzes the formation of 5-methyl-uridine at position 747 (m5U747) in 23S rRNA. This chain is 23S rRNA (uracil(747)-C(5))-methyltransferase RlmC, found in Haemophilus influenzae (strain ATCC 51907 / DSM 11121 / KW20 / Rd).